Reading from the N-terminus, the 181-residue chain is Protein Syd (181 aa).

It belongs to the Syd family.

It localises to the cell inner membrane. Its function is as follows. Interacts with the SecY protein in vivo. May bind preferentially to an uncomplexed state of SecY, thus functioning either as a chelating agent for excess SecY in the cell or as a regulatory factor that negatively controls the translocase function. The protein is Protein Syd of Alteromonas mediterranea (strain DSM 17117 / CIP 110805 / LMG 28347 / Deep ecotype).